Consider the following 810-residue polypeptide: F-BAR domain only protein 2 (810 aa).

In terms of domain architecture, F-BAR spans 3 to 250 (MAYFVENFWG…NMANTTVESL (248 aa)). The mediates dimerization and binding to membranes enriched in Pi(4,5)-P2 and induces their tubulation stretch occupies residues 3 to 274 (MAYFVENFWG…PGLIEFEECD (272 aa)). Residues 87–156 (HLDLVRKLQE…CVEQERLKKE (70 aa)) are a coiled coil. Lysine 297 is covalently cross-linked (Glycyl lysine isopeptide (Lys-Gly) (interchain with G-Cter in SUMO2)). Residues 301-352 (DAESVECPDADSLNIPDVDEEGYSIKPETNQNDTKENHFYSSSDSDSEDEEP) are disordered. Phosphoserine is present on serine 312. Threonine 385 bears the Phosphothreonine mark. A phosphoserine mark is found at serine 387, serine 394, and serine 403. The disordered stretch occupies residues 403–537 (SNEELTKSKP…VSRGPSPVSL (135 aa)). Positions 433-456 (PSLDSSSSSSLTSSSSARPTTPLS) are enriched in low complexity. Phosphoserine is present on residues serine 488, serine 493, serine 496, serine 508, serine 510, serine 511, and serine 533. A compositionally biased stretch (low complexity) spans 502–521 (PLARAESSSSISSSASLSAA). Positions 521-810 (ANTPTVGVSR…FATGRYLADC (290 aa)) are mediates interaction with DAB2, EPS15, EPS15R and ITSN1. An MHD domain is found at 542 to 809 (TLPVAVALTE…RFATGRYLAD (268 aa)).

Belongs to the FCHO family. As to quaternary structure, homodimer; disulfide-linked. May form homotetramer. Interacts with AP2A1. Interacts with EPS15, EPS15R, ITSN1 and ITSN2; recruit those scaffolding proteins which in turn may interact with the adaptor protein complex AP-2 at the plasma membrane. Interacts with DAB2 (via DPF motifs); mediates LDL receptor/LDLR endocytosis. Ubiquitinated. Mainly undergoes monoubiquitination but also polyubiquitination.

It is found in the membrane. Its subcellular location is the clathrin-coated pit. Functions in an early step of clathrin-mediated endocytosis. Has both a membrane binding/bending activity and the ability to recruit proteins essential to the formation of functional clathrin-coated pits. Has a lipid-binding activity with a preference for membranes enriched in phosphatidylserine and phosphoinositides (Pi(4,5) biphosphate) like the plasma membrane. Its membrane-bending activity might be important for the subsequent action of clathrin and adaptors in the formation of clathrin-coated vesicles. Involved in adaptor protein complex AP-2-dependent endocytosis of the transferrin receptor, it also functions in the AP-2-independent endocytosis of the LDL receptor. The chain is F-BAR domain only protein 2 (FCHO2) from Pongo abelii (Sumatran orangutan).